Reading from the N-terminus, the 346-residue chain is Probable disease resistance protein At5g45440 (346 aa).

The region spanning 38–116 is the NB-ARC domain; it reads KQVEDRVETD…AYAPRIWVSM (79 aa). Residue 85-92 participates in ATP binding; it reads GEYGVGKT. A disordered region spans residues 315 to 346; sequence FDDGKANQNGSKDGKTDSVDNPNSEESKTKPL.

Possible disease resistance protein. This is Probable disease resistance protein At5g45440 from Arabidopsis thaliana (Mouse-ear cress).